Consider the following 1047-residue polypeptide: Probable phospholipid-transporting ATPase IIA (1047 aa).

T2 bears the N-acetylthreonine mark. Residues 2 to 69 (TDNIPLQPVR…NQKYNFFTFL (68 aa)) lie on the Cytoplasmic side of the membrane. A helical membrane pass occupies residues 70–91 (PGVLFNQFKYFFNLYFLLLACS). The Extracellular portion of the chain corresponds to 92 to 96 (QFVPE). A helical membrane pass occupies residues 97–119 (MRLGALYTYWVPLGFVLAVTVIR). The Cytoplasmic segment spans residues 120-303 (EAVEEIRCYV…GLFDLEVNCL (184 aa)). A helical membrane pass occupies residues 304-325 (TKILFGALVVVSLVMVALQHFA). The Extracellular portion of the chain corresponds to 326-332 (GRWYLQI). The helical transmembrane segment at 333-354 (IRFLLLFSNIIPISLRVNLDMG) threads the bilayer. The Cytoplasmic segment spans residues 355–841 (KIVYSWVIRR…GRNSYKRSAA (487 aa)). Catalysis depends on D391, which acts as the 4-aspartylphosphate intermediate. D391, K392, T393, E502, F544, K549, K568, R597, T677, G678, D679, R759, and K765 together coordinate ATP. D391 is a binding site for Mg(2+). T393 serves as a coordination point for Mg(2+). D785 provides a ligand contact to Mg(2+). ATP-binding residues include N788 and D789. D789 lines the Mg(2+) pocket. The chain crosses the membrane as a helical span at residues 842-862 (LSQFVIHRSLCISTMQAVFSS). Residues 863–874 (VFYFASVPLYQG) are Extracellular-facing. A helical transmembrane segment spans residues 875–893 (FLIIGYSTIYTMFPVFSLV). At 894–923 (LDKDVKSEVAMLYPELYKDLLKGRPLSYKT) the chain is on the cytoplasmic side. Residues 924 to 942 (FLIWVLISIYQGSTIMYGA) form a helical membrane-spanning segment. Topologically, residues 943–949 (LLLFESE) are extracellular. The helical transmembrane segment at 950 to 972 (FVHIVAISFTSLILTELLMVALT) threads the bilayer. The Cytoplasmic portion of the chain corresponds to 973 to 978 (IQTWHW). A helical membrane pass occupies residues 979-999 (LMTVAELLSLACYIASLVFLH). Over 1000–1006 (EFIDVYF) the chain is Extracellular. Residues 1007–1030 (IATLSFLWKVSVITLVSCLPLYVL) traverse the membrane as a helical segment. Over 1031 to 1047 (KYLRRRFSPPSYSKLTS) the chain is Cytoplasmic.

This sequence belongs to the cation transport ATPase (P-type) (TC 3.A.3) family. Type IV subfamily. Heterotrimer with MON2 and DOP1B; this complex regulates SNX3-retromer mediated endosomal sorting of WLS. Interacts with RAB5A and RAB11A. The cofactor is Mg(2+).

It localises to the early endosome membrane. Its subcellular location is the recycling endosome membrane. The protein localises to the late endosome membrane. The protein resides in the golgi apparatus. It is found in the trans-Golgi network membrane. It localises to the cell membrane. The catalysed reaction is ATP + H2O + phospholipidSide 1 = ADP + phosphate + phospholipidSide 2.. Functionally, plays a role in regulating membrane trafficking of cargo proteins, namely endosome to plasma membrane recycling, probably acting through RAB5 and RAB11 activation. Also involved in endosome to trans-Golgi network retrograde transport. In complex with MON2 and DOP1B, regulates SNX3 retromer-mediated endosomal sorting of WLS, a transporter of Wnt morphogens in developing tissues. Participates in the formation of endosomal carriers that direct WLS trafficking back to Golgi, away from lysosomal degradation. Appears to be implicated in intercellular communication by negatively regulating the release of exosomes. The flippase activity towards membrane lipids and its role in membrane asymmetry remains to be proved. Required for the maintenance of neurite morphology and synaptic transmission. In Homo sapiens (Human), this protein is Probable phospholipid-transporting ATPase IIA.